The primary structure comprises 291 residues: Aliphatic sulfonates import ATP-binding protein SsuB 2 (291 aa).

The ABC transporter domain maps to 26-247 (LRVRGIAKRY…APGLPALASI (222 aa)). 58-65 (GRSGCGKS) lines the ATP pocket. The tract at residues 264–291 (PAAPKAQTRHGPPRGATAQDTSPLQRIL) is disordered. Residues 281–291 (AQDTSPLQRIL) are compositionally biased toward polar residues.

This sequence belongs to the ABC transporter superfamily. Aliphatic sulfonates importer (TC 3.A.1.17.2) family. The complex is composed of two ATP-binding proteins (SsuB), two transmembrane proteins (SsuC) and a solute-binding protein (SsuA).

The protein resides in the cell inner membrane. It carries out the reaction ATP + H2O + aliphatic sulfonate-[sulfonate-binding protein]Side 1 = ADP + phosphate + aliphatic sulfonateSide 2 + [sulfonate-binding protein]Side 1.. Part of the ABC transporter complex SsuABC involved in aliphatic sulfonates import. Responsible for energy coupling to the transport system. In Xanthomonas axonopodis pv. citri (strain 306), this protein is Aliphatic sulfonates import ATP-binding protein SsuB 2.